Consider the following 105-residue polypeptide: Large ribosomal subunit protein mL49 (105 aa).

The transit peptide at 1–15 directs the protein to the mitochondrion; it reads MRSSLKPVLSNLRFN.

It belongs to the mitochondrion-specific ribosomal protein mL49 family. In terms of assembly, component of the mitochondrial large ribosomal subunit (mt-LSU). Mature yeast 74S mitochondrial ribosomes consist of a small (37S) and a large (54S) subunit. The 37S small subunit contains a 15S ribosomal RNA (15S mt-rRNA) and at least 32 different proteins. The 54S large subunit contains a 21S rRNA (21S mt-rRNA) and at least 45 different proteins.

Its subcellular location is the mitochondrion. Component of the mitochondrial ribosome (mitoribosome), a dedicated translation machinery responsible for the synthesis of mitochondrial genome-encoded proteins, including at least some of the essential transmembrane subunits of the mitochondrial respiratory chain. The mitoribosomes are attached to the mitochondrial inner membrane and translation products are cotranslationally integrated into the membrane. The chain is Large ribosomal subunit protein mL49 (img2) from Schizosaccharomyces pombe (strain 972 / ATCC 24843) (Fission yeast).